The following is a 467-amino-acid chain: Probable lipase C1672.09 (467 aa).

Over 1–17 (MIQLPFIQRLKWEEYMA) the chain is Cytoplasmic. Residues 18–38 (LFLGFFFVIFEKLLSCLAFMI) traverse the membrane as a helical; Signal-anchor for type II membrane protein segment. The Lumenal portion of the chain corresponds to 39-467 (HNTLGLFYRS…NHIAPRNKPI (429 aa)). The residue at position 66 (S66) is a Phosphoserine. One can recognise an AB hydrolase-1 domain in the interval 127–421 (PVVYCHHGLL…SYEHLDMIWA (295 aa)). Catalysis depends on S222, which acts as the Nucleophile. N-linked (GlcNAc...) asparagine glycans are attached at residues N311 and N316. Active-site charge relay system residues include D389 and H415. Over residues 440–457 (HHPPEHEENDKENREIQK) the composition is skewed to basic and acidic residues. A disordered region spans residues 440 to 467 (HHPPEHEENDKENREIQKNHIAPRNKPI).

This sequence belongs to the AB hydrolase superfamily. Lipase family.

It localises to the cytoplasm. The protein localises to the membrane. In terms of biological role, probable lipase. The polypeptide is Probable lipase C1672.09 (Schizosaccharomyces pombe (strain 972 / ATCC 24843) (Fission yeast)).